We begin with the raw amino-acid sequence, 158 residues long: 2-C-methyl-D-erythritol 2,4-cyclodiphosphate synthase (158 aa).

A divalent metal cation is bound by residues Asp-9 and His-11. Residues 9–11 and 35–36 each bind 4-CDP-2-C-methyl-D-erythritol 2-phosphate; these read DVH and HS. His-43 is an a divalent metal cation binding site. 4-CDP-2-C-methyl-D-erythritol 2-phosphate-binding positions include 57 to 59, 62 to 66, 101 to 107, 133 to 136, Phe-140, and Arg-143; these read DIG, FPDTD, AQKPKMA, and TTTE.

The protein belongs to the IspF family. Homotrimer. A divalent metal cation serves as cofactor.

The catalysed reaction is 4-CDP-2-C-methyl-D-erythritol 2-phosphate = 2-C-methyl-D-erythritol 2,4-cyclic diphosphate + CMP. It participates in isoprenoid biosynthesis; isopentenyl diphosphate biosynthesis via DXP pathway; isopentenyl diphosphate from 1-deoxy-D-xylulose 5-phosphate: step 4/6. Its function is as follows. Involved in the biosynthesis of isopentenyl diphosphate (IPP) and dimethylallyl diphosphate (DMAPP), two major building blocks of isoprenoid compounds. Catalyzes the conversion of 4-diphosphocytidyl-2-C-methyl-D-erythritol 2-phosphate (CDP-ME2P) to 2-C-methyl-D-erythritol 2,4-cyclodiphosphate (ME-CPP) with a corresponding release of cytidine 5-monophosphate (CMP). The sequence is that of 2-C-methyl-D-erythritol 2,4-cyclodiphosphate synthase from Bacillus cereus (strain ATCC 10987 / NRS 248).